The following is a 515-amino-acid chain: Bifunctional purine biosynthesis protein PurH (515 aa).

The 145-residue stretch at 1 to 145 (MTKRALISVS…KNHASVTVVV (145 aa)) folds into the MGS-like domain.

The protein belongs to the PurH family.

It catalyses the reaction (6R)-10-formyltetrahydrofolate + 5-amino-1-(5-phospho-beta-D-ribosyl)imidazole-4-carboxamide = 5-formamido-1-(5-phospho-D-ribosyl)imidazole-4-carboxamide + (6S)-5,6,7,8-tetrahydrofolate. The catalysed reaction is IMP + H2O = 5-formamido-1-(5-phospho-D-ribosyl)imidazole-4-carboxamide. It participates in purine metabolism; IMP biosynthesis via de novo pathway; 5-formamido-1-(5-phospho-D-ribosyl)imidazole-4-carboxamide from 5-amino-1-(5-phospho-D-ribosyl)imidazole-4-carboxamide (10-formyl THF route): step 1/1. It functions in the pathway purine metabolism; IMP biosynthesis via de novo pathway; IMP from 5-formamido-1-(5-phospho-D-ribosyl)imidazole-4-carboxamide: step 1/1. In Streptococcus thermophilus (strain ATCC BAA-491 / LMD-9), this protein is Bifunctional purine biosynthesis protein PurH.